Reading from the N-terminus, the 105-residue chain is N(4)-acetylcytidine amidohydrolase (105 aa).

The ASCH domain maps to 7 to 93 (TFFERFEHDI…VIAEIYPGLE (87 aa)). Lysine 21 acts as the Proton acceptor in catalysis. Residue threonine 24 is the Nucleophile of the active site. The Proton donor role is filled by glutamate 74.

The protein belongs to the N(4)-acetylcytidine amidohydrolase family.

It carries out the reaction N(4)-acetylcytidine + H2O = cytidine + acetate + H(+). The catalysed reaction is N(4)-acetyl-2'-deoxycytidine + H2O = 2'-deoxycytidine + acetate + H(+). It catalyses the reaction N(4)-acetylcytosine + H2O = cytosine + acetate + H(+). Its function is as follows. Catalyzes the hydrolysis of N(4)-acetylcytidine (ac4C). The polypeptide is N(4)-acetylcytidine amidohydrolase (Shewanella baltica (strain OS223)).